The primary structure comprises 529 residues: Probable DNA helicase MPN_340 (529 aa).

Residues 2 to 285 enclose the UvrD-like helicase ATP-binding domain; sequence EHLNQEQKAA…FYTTQNYRSI (284 aa). 23-30 contacts ATP; sequence SGAGTGKT.

It belongs to the helicase family. UvrD subfamily.

The enzyme catalyses Couples ATP hydrolysis with the unwinding of duplex DNA by translocating in the 3'-5' direction.. It catalyses the reaction ATP + H2O = ADP + phosphate + H(+). The chain is Probable DNA helicase MPN_340 from Mycoplasma pneumoniae (strain ATCC 29342 / M129 / Subtype 1) (Mycoplasmoides pneumoniae).